Here is a 462-residue protein sequence, read N- to C-terminus: Acetyl-CoA decarbonylase/synthase complex subunit gamma (462 aa).

The 4Fe-4S domain occupies 1 to 60 (MAQLSAMDVYNLLPKANCGACGCKTCMEFATKLVNREAKPEDCPKLDDESLEKLQELLAP). Residues Cys-18, Cys-21, Cys-26, and Cys-43 each coordinate [4Fe-4S] cluster.

In terms of assembly, heterodimer of delta and gamma chains. The ACDS complex is made up of alpha, epsilon, beta, gamma and delta chains with a probable stoichiometry of (alpha(2)epsilon(2))(4)-beta(8)-(gamma(1)delta(1))(8). It depends on corrinoid as a cofactor. [4Fe-4S] cluster serves as cofactor.

The catalysed reaction is 5,6,7,8-tetrahydrosarcinapterin + methyl-Co(III)-[corrinoid Fe-S protein] = 5-methyltetrahydrosarcinapterin + Co(I)-[corrinoid Fe-S protein] + H(+). Its function is as follows. Part of a complex that catalyzes the reversible cleavage of acetyl-CoA, allowing autotrophic growth from CO(2). This chain is Acetyl-CoA decarbonylase/synthase complex subunit gamma, found in Methanopyrus kandleri (strain AV19 / DSM 6324 / JCM 9639 / NBRC 100938).